A 717-amino-acid chain; its full sequence is UvrABC system protein C (717 aa).

The GIY-YIG domain maps to 16 to 95 (DAPGVYRFHD…IKEYDPRFNV (80 aa)). A UVR domain is found at 208 to 243 (DTLIRKLDREMRQASEELEFERAARLRDDLEALRRA). Disordered regions lie at residues 517–555 (TAAGNGLADTAAGEPEADVAVTPQEAERTGIDPETGRPR) and 696–717 (HAALAAGGGTGESRDNAEGESQ). Composition is skewed to basic and acidic residues over residues 541 to 553 (EAERTGIDPETGR) and 707 to 717 (ESRDNAEGESQ).

The protein belongs to the UvrC family. Interacts with UvrB in an incision complex.

The protein resides in the cytoplasm. Its function is as follows. The UvrABC repair system catalyzes the recognition and processing of DNA lesions. UvrC both incises the 5' and 3' sides of the lesion. The N-terminal half is responsible for the 3' incision and the C-terminal half is responsible for the 5' incision. This chain is UvrABC system protein C, found in Saccharopolyspora erythraea (strain ATCC 11635 / DSM 40517 / JCM 4748 / NBRC 13426 / NCIMB 8594 / NRRL 2338).